We begin with the raw amino-acid sequence, 464 residues long: Tryprostatin B synthase (464 aa).

Brevianamide F is bound by residues Met-94 and Glu-102. Dimethylallyl diphosphate is bound by residues Arg-113, Lys-201, and Tyr-203. A brevianamide F-binding site is contributed by Tyr-205. 6 residues coordinate dimethylallyl diphosphate: Lys-294, Tyr-296, Gln-380, Tyr-382, Tyr-446, and Tyr-450.

It belongs to the tryptophan dimethylallyltransferase family.

The enzyme catalyses brevianamide F + dimethylallyl diphosphate = tryprostatin B + diphosphate. It functions in the pathway mycotoxin biosynthesis. In terms of biological role, brevianamide F prenyltransferase; part of the gene cluster that mediates the biosynthesis of fumitremorgins, indole alkaloids that carry not only intriguing chemical structures, but also interesting biological and pharmacological activities. The biosynthesis of fumitremorgin-type alkaloids begins by condensation of the two amino acids L-tryptophan and L-proline to brevianamide F, catalyzed by the non-ribosomal peptide synthetase ftmA. Brevianamide F is then prenylated by the prenyltransferase ftmPT1/ftmB in the presence of dimethylallyl diphosphate, resulting in the formation of tryprostatin B. The three cytochrome P450 monooxygenases, ftmP450-1/ftmC, ftmP450-2/ftmE and ftmP450-3/FtmG, are responsible for the conversion of tryprostatin B to 6-hydroxytryprostatin B, tryprostatin A to fumitremorgin C and fumitremorgin C to 12,13-dihydroxyfumitremorgin C, respectively. The putative methyltransferase ftmMT/ftmD is expected for the conversion of 6-hydroxytryprostatin B to tryprostatin A. FtmPT2/FtmH catalyzes the prenylation of 12,13-dihydroxyfumitre-morgin C in the presence of dimethylallyl diphosphate, resulting in the formation of fumitremorgin B. Fumitremorgin B is further converted to verruculogen by ftmOx1/ftmF via the insertion of an endoperoxide bond between the two prenyl moieties. In some fungal species, verruculogen is further converted to fumitremorgin A, but the enzymes involved in this step have not been identified yet. The polypeptide is Tryprostatin B synthase (Aspergillus fumigatus (Neosartorya fumigata)).